The chain runs to 289 residues: Nucleotide-binding protein Francci3_1634 (289 aa).

An ATP-binding site is contributed by 13-20 (GLSGAGRS). A GTP-binding site is contributed by 64 to 67 (DVRG).

The protein belongs to the RapZ-like family.

Displays ATPase and GTPase activities. The protein is Nucleotide-binding protein Francci3_1634 of Frankia casuarinae (strain DSM 45818 / CECT 9043 / HFP020203 / CcI3).